Consider the following 109-residue polypeptide: Hainantoxin-XVIII-5 (109 aa).

Residues 1–18 form the signal peptide; that stretch reads MKLSIIIIATSLVIAVVA. The propeptide occupies 19-46; it reads FPSKDSKAIENDKTEQRMEIVVQETARA. 4 cysteine pairs are disulfide-bonded: cysteine 47-cysteine 62, cysteine 55-cysteine 68, cysteine 59-cysteine 108, and cysteine 61-cysteine 81.

Belongs to the neurotoxin 25 family. F7 subfamily. In terms of tissue distribution, expressed by the venom gland.

The protein localises to the secreted. Its function is as follows. Putative ion channel inhibitor. The sequence is that of Hainantoxin-XVIII-5 from Cyriopagopus hainanus (Chinese bird spider).